The sequence spans 547 residues: GMP synthase [glutamine-hydrolyzing] (547 aa).

One can recognise a Glutamine amidotransferase type-1 domain in the interval K12–D210. Residue C89 is the Nucleophile of the active site. Residues H184 and E186 contribute to the active site. The GMPS ATP-PPase domain occupies W211–R403. S238–S244 contacts ATP.

In terms of assembly, homodimer.

The enzyme catalyses XMP + L-glutamine + ATP + H2O = GMP + L-glutamate + AMP + diphosphate + 2 H(+). It functions in the pathway purine metabolism; GMP biosynthesis; GMP from XMP (L-Gln route): step 1/1. Functionally, catalyzes the synthesis of GMP from XMP. The protein is GMP synthase [glutamine-hydrolyzing] of Ralstonia nicotianae (strain ATCC BAA-1114 / GMI1000) (Ralstonia solanacearum).